The following is a 300-amino-acid chain: Ribosomal protein L11 methyltransferase (300 aa).

The S-adenosyl-L-methionine site is built by T152, G173, D195, and N234.

This sequence belongs to the methyltransferase superfamily. PrmA family.

Its subcellular location is the cytoplasm. The catalysed reaction is L-lysyl-[protein] + 3 S-adenosyl-L-methionine = N(6),N(6),N(6)-trimethyl-L-lysyl-[protein] + 3 S-adenosyl-L-homocysteine + 3 H(+). Functionally, methylates ribosomal protein L11. The protein is Ribosomal protein L11 methyltransferase of Burkholderia lata (strain ATCC 17760 / DSM 23089 / LMG 22485 / NCIMB 9086 / R18194 / 383).